Consider the following 430-residue polypeptide: Enolase (430 aa).

Gln167 is a binding site for (2R)-2-phosphoglycerate. The active-site Proton donor is the Glu209. Mg(2+) contacts are provided by Asp246, Glu287, and Asp314. Lys339, Arg368, Ser369, and Lys390 together coordinate (2R)-2-phosphoglycerate. The Proton acceptor role is filled by Lys339.

Belongs to the enolase family. It depends on Mg(2+) as a cofactor.

The protein resides in the cytoplasm. It localises to the secreted. It is found in the cell surface. It carries out the reaction (2R)-2-phosphoglycerate = phosphoenolpyruvate + H2O. Its pathway is carbohydrate degradation; glycolysis; pyruvate from D-glyceraldehyde 3-phosphate: step 4/5. Functionally, catalyzes the reversible conversion of 2-phosphoglycerate (2-PG) into phosphoenolpyruvate (PEP). It is essential for the degradation of carbohydrates via glycolysis. The sequence is that of Enolase from Prochlorococcus marinus (strain MIT 9301).